The sequence spans 231 residues: Large ribosomal subunit protein uL3 (231 aa).

Gln-151 bears the N5-methylglutamine mark.

This sequence belongs to the universal ribosomal protein uL3 family. Part of the 50S ribosomal subunit. Forms a cluster with proteins L14 and L19. Post-translationally, methylated by PrmB.

In terms of biological role, one of the primary rRNA binding proteins, it binds directly near the 3'-end of the 23S rRNA, where it nucleates assembly of the 50S subunit. The polypeptide is Large ribosomal subunit protein uL3 (Ehrlichia canis (strain Jake)).